The sequence spans 552 residues: Cation/acetate symporter ActP (552 aa).

14 helical membrane-spanning segments follow: residues 5 to 25, 35 to 55, 78 to 98, 105 to 125, 151 to 171, 185 to 205, 208 to 228, 264 to 284, 305 to 325, 357 to 377, 407 to 427, 431 to 451, 466 to 486, and 499 to 519; these read FMMLFGLLTLPVLAWAADALT, IQAIVMFLLFVGGTLYITYWA, GLAIAGDYMSAASFLGISALV, GLIYSLGFLVGWPIILFLIAE, LSACGSLVVVALYLIAQMVGA, VAVILVGILMVMYVMFGGMLA, WVQIIKAVLLLFGATFMAVMV, ISALSLGLGLMFGTAGLPHIL, GFMGYFYFLTFIIGFGAILLV, FFLGFISAVAFATILAVVAGL, VSKITVLVLGVVAISLGILFE, IAFMVGLAFSIAASCNFPIII, IGGWAGLLTAVILMILGPTIW, and YDYPALFSMLVAFIGIWFFSI.

Belongs to the sodium:solute symporter (SSF) (TC 2.A.21) family.

It localises to the cell inner membrane. Functionally, transports acetate. The chain is Cation/acetate symporter ActP from Pectobacterium carotovorum subsp. carotovorum (strain PC1).